We begin with the raw amino-acid sequence, 435 residues long: Trigger factor (435 aa).

The region spanning 162–247 (GDRINIDYRG…LSGVESSKLP (86 aa)) is the PPIase FKBP-type domain.

This sequence belongs to the FKBP-type PPIase family. Tig subfamily.

The protein resides in the cytoplasm. It catalyses the reaction [protein]-peptidylproline (omega=180) = [protein]-peptidylproline (omega=0). In terms of biological role, involved in protein export. Acts as a chaperone by maintaining the newly synthesized protein in an open conformation. Functions as a peptidyl-prolyl cis-trans isomerase. This chain is Trigger factor, found in Nitrosospira multiformis (strain ATCC 25196 / NCIMB 11849 / C 71).